The primary structure comprises 341 residues: D-aspartate oxidase (341 aa).

D36, K37, T43, S44, M50, G307, and I311 together coordinate FAD. The Microbody targeting signal motif lies at 339–341; sequence SKL.

It belongs to the DAMOX/DASOX family. Homotetramer. Interacts with PEX5; the interaction is direct and required for localization of DDO to the peroxisome. The cofactor is FAD. As to expression, expressed in epithelial cells of the renal proximal tubules (not detected in the glomeruli or renal distal tubules), liver, right atrium of heart, lung, chief cells of the gastric mucosa, choroid plexus, pia mater, brain stem, midbrain, pons, medulla oblongata, hypothalamus, hippocampus, cerebral cortex, cerebellum, ependyma, olfactory bulb and the pituitary, pineal, thyroid and adrenal glands (at protein level).

Its subcellular location is the peroxisome matrix. It localises to the cytoplasm. The protein localises to the cytosol. The catalysed reaction is D-aspartate + O2 + H2O = oxaloacetate + H2O2 + NH4(+). It carries out the reaction D-glutamate + O2 + H2O = H2O2 + 2-oxoglutarate + NH4(+). In terms of biological role, selectively catalyzes the oxidative deamination of acidic amino acids. Suppresses the level of D-aspartate in the brain, an amino acid that can act as an agonist for glutamate receptors. Protects the organism from the toxicity of D-amino acids. May also function in the intestine. The sequence is that of D-aspartate oxidase (DDO) from Sus scrofa (Pig).